The sequence spans 194 residues: Ion-translocating oxidoreductase complex subunit A (194 aa).

6 helical membrane passes run 4–24 (LALI…QFLG), 39–59 (IGLS…SHIL), 72–92 (LRTI…EMLV), 102–122 (VLGI…VALL), 135–155 (TTQG…FAAL), and 172–192 (AIGM…SGLV).

It belongs to the NqrDE/RnfAE family. The complex is composed of six subunits: RnfA, RnfB, RnfC, RnfD, RnfE and RnfG.

The protein resides in the cell inner membrane. Its function is as follows. Part of a membrane-bound complex that couples electron transfer with translocation of ions across the membrane. The chain is Ion-translocating oxidoreductase complex subunit A from Pseudomonas aeruginosa (strain LESB58).